Reading from the N-terminus, the 545-residue chain is Calcium-dependent protein kinase 10 (545 aa).

The disordered stretch occupies residues 1–36 (MGNCNACVRPDSKESKPSSKPKKPNRDRKLNPFAGD). The N-myristoyl glycine moiety is linked to residue Gly2. One can recognise a Protein kinase domain in the interval 63–321 (YILGRELGRG…AQQVLAHPWI (259 aa)). Residues 69-77 (LGRGEFGIT) and Lys92 each bind ATP. The Proton acceptor role is filled by Asp187. A Phosphoserine modification is found at Ser227. The interval 327–357 (APNVPLGDIVRSRLKQFSMMNRFKKKVLRVI) is autoinhibitory domain. EF-hand domains are found at residues 364-399 (QEVE…VGSQ), 400-435 (LGEP…LQKI), 436-471 (ENDE…ELGE), and 472-507 (PDAS…GTDW). Ca(2+) contacts are provided by Asp377, Asp379, Asp381, Lys383, Glu388, Asp413, Asp415, Asn417, Glu424, Asp449, Asp451, Ser453, Tyr455, Glu460, Asp485, Asp487, Asp489, Arg491, and Glu496.

This sequence belongs to the protein kinase superfamily. Ser/Thr protein kinase family. CDPK subfamily.

It is found in the membrane. It catalyses the reaction L-seryl-[protein] + ATP = O-phospho-L-seryl-[protein] + ADP + H(+). The catalysed reaction is L-threonyl-[protein] + ATP = O-phospho-L-threonyl-[protein] + ADP + H(+). Activated by calcium. Autophosphorylation may play an important role in the regulation of the kinase activity. In terms of biological role, may play a role in signal transduction pathways that involve calcium as a second messenger. May be a positive regulator controlling stress signal transduction. This chain is Calcium-dependent protein kinase 10 (CPK10), found in Arabidopsis thaliana (Mouse-ear cress).